A 975-amino-acid polypeptide reads, in one-letter code: Glycine dehydrogenase (decarboxylating) (975 aa).

N6-(pyridoxal phosphate)lysine is present on Lys723.

It belongs to the GcvP family. In terms of assembly, the glycine cleavage system is composed of four proteins: P, T, L and H. Pyridoxal 5'-phosphate is required as a cofactor.

The enzyme catalyses N(6)-[(R)-lipoyl]-L-lysyl-[glycine-cleavage complex H protein] + glycine + H(+) = N(6)-[(R)-S(8)-aminomethyldihydrolipoyl]-L-lysyl-[glycine-cleavage complex H protein] + CO2. Functionally, the glycine cleavage system catalyzes the degradation of glycine. The P protein binds the alpha-amino group of glycine through its pyridoxal phosphate cofactor; CO(2) is released and the remaining methylamine moiety is then transferred to the lipoamide cofactor of the H protein. The chain is Glycine dehydrogenase (decarboxylating) from Burkholderia cenocepacia (strain HI2424).